Consider the following 314-residue polypeptide: Small ribosomal subunit protein uS2 (314 aa).

Basic and acidic residues-rich tracts occupy residues 244 to 265 (GGHD…GHKD) and 271 to 287 (DRRG…EDRA). The tract at residues 244-314 (GGHDERREQE…AAPEAAPAKE (71 aa)) is disordered. The segment covering 302-314 (APAAAPEAAPAKE) has biased composition (low complexity).

The protein belongs to the universal ribosomal protein uS2 family.

This chain is Small ribosomal subunit protein uS2, found in Anaeromyxobacter dehalogenans (strain 2CP-C).